The primary structure comprises 173 residues: MTPSFATCDLCDAHKNDVSGAFRVLPPVFRDFGGVRQFCGPVVTVKCFEDNSSVKAAVESVGYQETPAGRVGKVLVVDGGGSLRRALLGGNLGAAAARNGWAGVVIDGCVRDVSELAAVGLGIRALASMPLPTEKRGEGQSDLALQIQGVWVRPGDWLYADEDGMVLAAGRLV.

Substrate-binding positions include 89 to 92 (GGNL) and Arg-111. Asp-112 contacts a divalent metal cation.

Belongs to the class II aldolase/RraA-like family. In terms of assembly, homotrimer. A divalent metal cation is required as a cofactor.

The catalysed reaction is 4-hydroxy-4-methyl-2-oxoglutarate = 2 pyruvate. It carries out the reaction oxaloacetate + H(+) = pyruvate + CO2. Its function is as follows. Catalyzes the aldol cleavage of 4-hydroxy-4-methyl-2-oxoglutarate (HMG) into 2 molecules of pyruvate. Also contains a secondary oxaloacetate (OAA) decarboxylase activity due to the common pyruvate enolate transition state formed following C-C bond cleavage in the retro-aldol and decarboxylation reactions. This is Putative 4-hydroxy-4-methyl-2-oxoglutarate aldolase from Albidiferax ferrireducens (strain ATCC BAA-621 / DSM 15236 / T118) (Rhodoferax ferrireducens).